The following is a 659-amino-acid chain: PAN2-PAN3 deadenylation complex subunit PAN3 (659 aa).

2 disordered regions span residues M1–N26 and P103–I132. The segment at N26–L55 adopts a C3H1-type zinc-finger fold. Over residues S115–I132 the composition is skewed to polar residues. Residues Q262–S522 are pseudokinase domain. ATP-binding positions include R314, D363 to T370, and S422 to K423. Positions S523 to L561 form a coiled coil. Residues V562 to H659 form a knob domain region.

It belongs to the protein kinase superfamily. PAN3 family. Homodimer. Forms a heterotrimer with a catalytic subunit pan2 to form the poly(A)-nuclease (PAN) deadenylation complex. Interacts (via PAM-2 motif) with poly(A)-binding protein pab1 (via PABC domain), conferring substrate specificity of the enzyme complex.

The protein resides in the cytoplasm. In terms of biological role, regulatory subunit of the poly(A)-nuclease (PAN) deadenylation complex, one of two cytoplasmic mRNA deadenylases involved in mRNA turnover. PAN specifically shortens poly(A) tails of RNA and the activity is stimulated by poly(A)-binding protein pab1. PAN deadenylation is followed by rapid degradation of the shortened mRNA tails by the CCR4-NOT complex. Deadenylated mRNAs are then degraded by two alternative mechanisms, namely exosome-mediated 3'-5' exonucleolytic degradation, or deadenylation-dependent mRNA decaping and subsequent 5'-3' exonucleolytic degradation by xrn1. May also be involved in post-transcriptional maturation of mRNA poly(A) tails. pan3 acts as a positive regulator for PAN activity, recruiting the catalytic subunit pan2 to mRNA via its interaction with RNA and with pab1. The sequence is that of PAN2-PAN3 deadenylation complex subunit PAN3 from Aspergillus clavatus (strain ATCC 1007 / CBS 513.65 / DSM 816 / NCTC 3887 / NRRL 1 / QM 1276 / 107).